The primary structure comprises 427 residues: GTPase Obg (427 aa).

Positions 1-158 (MFIDKAKIHL…LTVTLELKLI (158 aa)) constitute an Obg domain. The 172-residue stretch at 159–330 (ADVGLVGFPN…LLDYVSIKLK (172 aa)) folds into the OBG-type G domain. GTP contacts are provided by residues 165-172 (GFPNVGKS), 190-194 (FTTLT), 212-215 (DIPG), 282-285 (NKTD), and 311-313 (SAA). Residues S172 and T192 each contribute to the Mg(2+) site. In terms of domain architecture, OCT spans 347–427 (LYELKEKDTN…IYDVEFEYFH (81 aa)).

Belongs to the TRAFAC class OBG-HflX-like GTPase superfamily. OBG GTPase family. In terms of assembly, monomer. Requires Mg(2+) as cofactor.

It localises to the cytoplasm. An essential GTPase which binds GTP, GDP and possibly (p)ppGpp with moderate affinity, with high nucleotide exchange rates and a fairly low GTP hydrolysis rate. Plays a role in control of the cell cycle, stress response, ribosome biogenesis and in those bacteria that undergo differentiation, in morphogenesis control. The sequence is that of GTPase Obg from Alkaliphilus metalliredigens (strain QYMF).